The primary structure comprises 369 residues: Histidine decarboxylase (369 aa).

Residue His119 coordinates substrate. Lys230 is subject to N6-(pyridoxal phosphate)lysine.

The protein belongs to the group II decarboxylase family. In terms of assembly, homotetramer. Requires pyridoxal 5'-phosphate as cofactor.

It catalyses the reaction L-histidine + H(+) = histamine + CO2. This Mesorhizobium japonicum (strain LMG 29417 / CECT 9101 / MAFF 303099) (Mesorhizobium loti (strain MAFF 303099)) protein is Histidine decarboxylase.